A 262-amino-acid chain; its full sequence is Aminoglycoside (3'') (9) adenylyltransferase (262 aa).

The enzyme catalyses streptomycin + ATP = 3''-O-adenylylstreptomycin + diphosphate. The catalysed reaction is spectinomycin + ATP = 9-O-adenylylspectinomycin + diphosphate. Mediates bacterial resistance to the antibiotics streptomycin and spectinomycin. This Klebsiella pneumoniae protein is Aminoglycoside (3'') (9) adenylyltransferase.